The following is a 385-amino-acid chain: Prepilin peptidase EppA (385 aa).

10 helical membrane-spanning segments follow: residues M1–A21, G29–A49, W58–W78, M80–F100, L104–L124, V126–I146, T166–D186, F187–I207, F231–I251, and P358–F378.

This sequence belongs to the peptidase A24 family.

It is found in the cell membrane. Functionally, peptidase that processes the N-terminus of prepilins. This is Prepilin peptidase EppA from Methanothermobacter thermautotrophicus (strain ATCC 29096 / DSM 1053 / JCM 10044 / NBRC 100330 / Delta H) (Methanobacterium thermoautotrophicum).